Reading from the N-terminus, the 451-residue chain is Phosphoglucosamine mutase (451 aa).

Catalysis depends on Ser107, which acts as the Phosphoserine intermediate. Mg(2+) is bound by residues Ser107, Asp246, Asp248, and Asp250. Residue Ser107 is modified to Phosphoserine.

This sequence belongs to the phosphohexose mutase family. It depends on Mg(2+) as a cofactor. Post-translationally, activated by phosphorylation.

It carries out the reaction alpha-D-glucosamine 1-phosphate = D-glucosamine 6-phosphate. In terms of biological role, catalyzes the conversion of glucosamine-6-phosphate to glucosamine-1-phosphate. This Burkholderia lata (strain ATCC 17760 / DSM 23089 / LMG 22485 / NCIMB 9086 / R18194 / 383) protein is Phosphoglucosamine mutase.